The sequence spans 252 residues: 2-succinyl-6-hydroxy-2,4-cyclohexadiene-1-carboxylate synthase (252 aa).

It belongs to the AB hydrolase superfamily. MenH family. In terms of assembly, monomer.

The enzyme catalyses 5-enolpyruvoyl-6-hydroxy-2-succinyl-cyclohex-3-ene-1-carboxylate = (1R,6R)-6-hydroxy-2-succinyl-cyclohexa-2,4-diene-1-carboxylate + pyruvate. It functions in the pathway quinol/quinone metabolism; 1,4-dihydroxy-2-naphthoate biosynthesis; 1,4-dihydroxy-2-naphthoate from chorismate: step 3/7. It participates in quinol/quinone metabolism; menaquinone biosynthesis. In terms of biological role, catalyzes a proton abstraction reaction that results in 2,5-elimination of pyruvate from 2-succinyl-5-enolpyruvyl-6-hydroxy-3-cyclohexene-1-carboxylate (SEPHCHC) and the formation of 2-succinyl-6-hydroxy-2,4-cyclohexadiene-1-carboxylate (SHCHC). This Escherichia coli O7:K1 (strain IAI39 / ExPEC) protein is 2-succinyl-6-hydroxy-2,4-cyclohexadiene-1-carboxylate synthase.